The sequence spans 181 residues: Beta-lactoglobulin-2 (181 aa).

A signal peptide spans 1–18; sequence MKCLLLALGLSLMCGNQA. 2 cysteine pairs are disulfide-bonded: cysteine 84–cysteine 179 and cysteine 124–cysteine 138.

It belongs to the calycin superfamily. Lipocalin family. In terms of assembly, monomer.

It localises to the secreted. Functionally, lactoglobulin is the primary component of whey, it binds retinol and is probably involved in the transport of that molecule. The sequence is that of Beta-lactoglobulin-2 (LGB2) from Equus caballus (Horse).